The chain runs to 310 residues: HPr kinase/phosphorylase (310 aa).

Active-site residues include H138 and K159. 153-160 contributes to the ATP binding site; that stretch reads GASGIGKS. Mg(2+) is bound at residue S160. D177 (proton acceptor; for phosphorylation activity. Proton donor; for dephosphorylation activity) is an active-site residue. An important for the catalytic mechanism of both phosphorylation and dephosphorylation region spans residues 201 to 210; the sequence is IEIRGVGIID. E202 is a binding site for Mg(2+). R243 is an active-site residue. Positions 264-269 are important for the catalytic mechanism of dephosphorylation; that stretch reads PVKTGR.

It belongs to the HPrK/P family. In terms of assembly, homohexamer. Mg(2+) is required as a cofactor.

The enzyme catalyses [HPr protein]-L-serine + ATP = [HPr protein]-O-phospho-L-serine + ADP + H(+). The catalysed reaction is [HPr protein]-O-phospho-L-serine + phosphate + H(+) = [HPr protein]-L-serine + diphosphate. Functionally, catalyzes the ATP- as well as the pyrophosphate-dependent phosphorylation of a specific serine residue in HPr, a phosphocarrier protein of the phosphoenolpyruvate-dependent sugar phosphotransferase system (PTS). HprK/P also catalyzes the pyrophosphate-producing, inorganic phosphate-dependent dephosphorylation (phosphorolysis) of seryl-phosphorylated HPr (P-Ser-HPr). The two antagonistic activities of HprK/P are regulated by several intracellular metabolites, which change their concentration in response to the absence or presence of rapidly metabolisable carbon sources (glucose, fructose, etc.) in the growth medium. Therefore, by controlling the phosphorylation state of HPr, HPrK/P is a sensor enzyme that plays a major role in the regulation of carbon metabolism and sugar transport: it mediates carbon catabolite repression (CCR), and regulates PTS-catalyzed carbohydrate uptake and inducer exclusion. This Lactococcus lactis subsp. cremoris (strain MG1363) protein is HPr kinase/phosphorylase.